A 113-amino-acid chain; its full sequence is U11-theraphotoxin-Hhn1a (113 aa).

An N-terminal signal peptide occupies residues 1–21 (MNTVRVAFLLVFVLAVSLGQA). A propeptide spanning residues 22-74 (DKDENRMEMQEKTEQGKSYLDFAENLLLQKLEEPEAKLLEEDSEESRNSRQKR) is cleaved from the precursor. Basic and acidic residues predominate over residues 58 to 69 (KLLEEDSEESRN). The interval 58–83 (KLLEEDSEESRNSRQKRCIGEGVPCD) is disordered. Disulfide bonds link cysteine 75-cysteine 90, cysteine 82-cysteine 95, and cysteine 89-cysteine 110.

The protein belongs to the neurotoxin 14 (magi-1) family. 01 (HNTX-16) subfamily. As to expression, expressed by the venom gland.

Its subcellular location is the secreted. Probable ion channel inhibitor. This Cyriopagopus hainanus (Chinese bird spider) protein is U11-theraphotoxin-Hhn1a.